Consider the following 271-residue polypeptide: Urease accessory protein UreD (271 aa).

This sequence belongs to the UreD family. UreD, UreF and UreG form a complex that acts as a GTP-hydrolysis-dependent molecular chaperone, activating the urease apoprotein by helping to assemble the nickel containing metallocenter of UreC. The UreE protein probably delivers the nickel.

The protein resides in the cytoplasm. In terms of biological role, required for maturation of urease via the functional incorporation of the urease nickel metallocenter. In Haemophilus influenzae (strain PittEE), this protein is Urease accessory protein UreD.